The following is a 293-amino-acid chain: Ribosomal RNA small subunit methyltransferase A (293 aa).

Residues asparagine 29, leucine 31, glycine 56, glutamate 77, aspartate 102, and asparagine 127 each coordinate S-adenosyl-L-methionine.

Belongs to the class I-like SAM-binding methyltransferase superfamily. rRNA adenine N(6)-methyltransferase family. RsmA subfamily.

The protein resides in the cytoplasm. It carries out the reaction adenosine(1518)/adenosine(1519) in 16S rRNA + 4 S-adenosyl-L-methionine = N(6)-dimethyladenosine(1518)/N(6)-dimethyladenosine(1519) in 16S rRNA + 4 S-adenosyl-L-homocysteine + 4 H(+). Specifically dimethylates two adjacent adenosines (A1518 and A1519) in the loop of a conserved hairpin near the 3'-end of 16S rRNA in the 30S particle. May play a critical role in biogenesis of 30S subunits. The protein is Ribosomal RNA small subunit methyltransferase A of Geobacillus kaustophilus (strain HTA426).